Consider the following 75-residue polypeptide: Small ribosomal subunit protein bS18 (75 aa).

The protein belongs to the bacterial ribosomal protein bS18 family. Part of the 30S ribosomal subunit. Forms a tight heterodimer with protein bS6.

In terms of biological role, binds as a heterodimer with protein bS6 to the central domain of the 16S rRNA, where it helps stabilize the platform of the 30S subunit. The polypeptide is Small ribosomal subunit protein bS18 (Acinetobacter baylyi (strain ATCC 33305 / BD413 / ADP1)).